The chain runs to 72 residues: UPF0270 protein YheU (72 aa).

The protein belongs to the UPF0270 family.

In Salmonella agona (strain SL483), this protein is UPF0270 protein YheU.